Here is a 441-residue protein sequence, read N- to C-terminus: N-acetyl-S-(2-succino)cysteine monooxygenase (441 aa).

Asp59, Thr96, His146, Tyr150, Ser220, and Ser221 together coordinate FMN.

The protein belongs to the NtaA/SnaA/DszA monooxygenase family. In terms of assembly, homodimer. FMN serves as cofactor.

The catalysed reaction is N-acetyl-S-(2-succino)-L-cysteine + NADH + O2 + H(+) = N-acetyl-L-cysteine + oxaloacetate + NAD(+) + H2O. It participates in amino-acid biosynthesis; L-cysteine biosynthesis. Its function is as follows. Catalyzes the oxidative cleavage of the C-S bond of N-acetyl-S-(2-succino)cysteine, forming oxaloacetate and N-acetylcysteine (NAC). Is involved in a S-(2-succino)cysteine (2SC) degradation pathway that allows B.subtilis to grow on 2SC as a sole sulfur source, via its metabolization to cysteine. Shows almost no activity on S-succinylglutathione and 2SC. The polypeptide is N-acetyl-S-(2-succino)cysteine monooxygenase (Bacillus subtilis (strain 168)).